The chain runs to 330 residues: Phenylalanine--tRNA ligase alpha subunit (330 aa).

Glutamate 254 is a binding site for Mg(2+).

Belongs to the class-II aminoacyl-tRNA synthetase family. Phe-tRNA synthetase alpha subunit type 1 subfamily. As to quaternary structure, tetramer of two alpha and two beta subunits. The cofactor is Mg(2+).

The protein localises to the cytoplasm. The enzyme catalyses tRNA(Phe) + L-phenylalanine + ATP = L-phenylalanyl-tRNA(Phe) + AMP + diphosphate + H(+). The chain is Phenylalanine--tRNA ligase alpha subunit (pheS) from Neisseria meningitidis serogroup B (strain ATCC BAA-335 / MC58).